The chain runs to 358 residues: Thiol protease aleurain-like (358 aa).

Positions 1–21 (MSVKLNLSSSILLILFAAAAS) are cleaved as a signal peptide. A propeptide spans 22–140 (KEIGFDESNP…KGSHKITEAT (119 aa)) (activation peptide). A glycan (N-linked (GlcNAc...) asparagine) is linked at asparagine 125. Intrachain disulfides connect cysteine 162–cysteine 205 and cysteine 196–cysteine 238. Cysteine 165 is a catalytic residue. The N-linked (GlcNAc...) asparagine glycan is linked to asparagine 254. Cysteine 296 and cysteine 346 form a disulfide bridge. Active-site residues include histidine 305 and asparagine 325.

It belongs to the peptidase C1 family.

Its subcellular location is the vacuole. It carries out the reaction Hydrolysis of proteins, acting as an aminopeptidase (notably, cleaving Arg-|-Xaa bonds) as well as an endopeptidase.. May play a role in proteolysis leading to mobilization of nitrogen during senescence and starvation. The sequence is that of Thiol protease aleurain-like from Arabidopsis thaliana (Mouse-ear cress).